The primary structure comprises 360 residues: Alkanal monooxygenase alpha chain (360 aa).

The protein belongs to the bacterial luciferase oxidoreductase family. In terms of assembly, heterodimer of an alpha and a beta chain.

It catalyses the reaction a long-chain fatty aldehyde + FMNH2 + O2 = a long-chain fatty acid + hnu + FMN + H2O + 2 H(+). Light-emitting reaction in luminous bacteria. The sequence is that of Alkanal monooxygenase alpha chain (luxA) from Photorhabdus luminescens (Xenorhabdus luminescens).